A 158-amino-acid chain; its full sequence is 2-C-methyl-D-erythritol 2,4-cyclodiphosphate synthase (158 aa).

A divalent metal cation is bound by residues D9 and H11. 4-CDP-2-C-methyl-D-erythritol 2-phosphate-binding positions include 9 to 11 (DVH) and 35 to 36 (HS). H43 provides a ligand contact to a divalent metal cation. 4-CDP-2-C-methyl-D-erythritol 2-phosphate contacts are provided by residues 57-59 (DIG), 62-66 (FPDTD), 133-136 (TTTE), F140, and R143.

This sequence belongs to the IspF family. In terms of assembly, homotrimer. The cofactor is a divalent metal cation.

The catalysed reaction is 4-CDP-2-C-methyl-D-erythritol 2-phosphate = 2-C-methyl-D-erythritol 2,4-cyclic diphosphate + CMP. Its pathway is isoprenoid biosynthesis; isopentenyl diphosphate biosynthesis via DXP pathway; isopentenyl diphosphate from 1-deoxy-D-xylulose 5-phosphate: step 4/6. Its function is as follows. Involved in the biosynthesis of isopentenyl diphosphate (IPP) and dimethylallyl diphosphate (DMAPP), two major building blocks of isoprenoid compounds. Catalyzes the conversion of 4-diphosphocytidyl-2-C-methyl-D-erythritol 2-phosphate (CDP-ME2P) to 2-C-methyl-D-erythritol 2,4-cyclodiphosphate (ME-CPP) with a corresponding release of cytidine 5-monophosphate (CMP). In Actinobacillus succinogenes (strain ATCC 55618 / DSM 22257 / CCUG 43843 / 130Z), this protein is 2-C-methyl-D-erythritol 2,4-cyclodiphosphate synthase.